Consider the following 159-residue polypeptide: MVKLRLKRYGKKRQPSYRIIAIESKSRREARPLEELGYYNPRTKETVLQTAGLLKWLRCGAQPTETVDSLLKKAGIYEMLKAGEGGVVASIRIPAMAKPEAGIPEAAEEAPATESVAEAEVADVPESELSEAATETAAAELSPPEAEVEKPQVEEAVEA.

Over residues 102-119 (GIPEAAEEAPATESVAEA) the composition is skewed to low complexity. Positions 102–159 (GIPEAAEEAPATESVAEAEVADVPESELSEAATETAAAELSPPEAEVEKPQVEEAVEA) are disordered. Residues 120 to 129 (EVADVPESEL) are compositionally biased toward acidic residues. A compositionally biased stretch (low complexity) spans 130 to 145 (SEAATETAAAELSPPE).

Belongs to the bacterial ribosomal protein bS16 family.

This chain is Small ribosomal subunit protein bS16, found in Synechococcus sp. (strain JA-2-3B'a(2-13)) (Cyanobacteria bacterium Yellowstone B-Prime).